We begin with the raw amino-acid sequence, 297 residues long: Cell division protein ZipA (297 aa).

A topological domain (periplasmic) is located at residue M1. Residues 2-22 traverse the membrane as a helical segment; that stretch reads EIGLREWLILIGIIVIAGILF. Residues 23–297 lie on the Cytoplasmic side of the membrane; that stretch reads DGWRRMRGGK…FERRALTQKR (275 aa). The interval 48 to 150 is disordered; the sequence is DEEGGSAEVL…GAAPASSSVK (103 aa). Over residues 83 to 92 the composition is skewed to basic and acidic residues; it reads ARDREREPKP. Over residues 124–133 the composition is skewed to acidic residues; that stretch reads LFADSDDDFA. Residues 136-149 are compositionally biased toward polar residues; sequence NNRSSGAAPASSSV.

This sequence belongs to the ZipA family. In terms of assembly, interacts with FtsZ via their C-terminal domains.

The protein resides in the cell inner membrane. Functionally, essential cell division protein that stabilizes the FtsZ protofilaments by cross-linking them and that serves as a cytoplasmic membrane anchor for the Z ring. Also required for the recruitment to the septal ring of downstream cell division proteins. In Pseudomonas putida (strain ATCC 700007 / DSM 6899 / JCM 31910 / BCRC 17059 / LMG 24140 / F1), this protein is Cell division protein ZipA.